Here is a 204-residue protein sequence, read N- to C-terminus: Holliday junction branch migration complex subunit RuvA (204 aa).

The domain I stretch occupies residues 1 to 64 (MIGRLQGILL…EDAHLLFGFS (64 aa)). Residues 65-143 (AKTDRTLFRE…GIKQPDFFVE (79 aa)) form a domain II region. The interval 144–155 (SSHVGAVDPVTT) is flexible linker. Positions 156-204 (SPEVPAEEAVAALMALGYKASDAEKMVKRIAKPHLTSEQLIREALKAAL) are domain III.

Belongs to the RuvA family. Homotetramer. Forms an RuvA(8)-RuvB(12)-Holliday junction (HJ) complex. HJ DNA is sandwiched between 2 RuvA tetramers; dsDNA enters through RuvA and exits via RuvB. An RuvB hexamer assembles on each DNA strand where it exits the tetramer. Each RuvB hexamer is contacted by two RuvA subunits (via domain III) on 2 adjacent RuvB subunits; this complex drives branch migration. In the full resolvosome a probable DNA-RuvA(4)-RuvB(12)-RuvC(2) complex forms which resolves the HJ.

The protein localises to the cytoplasm. Functionally, the RuvA-RuvB-RuvC complex processes Holliday junction (HJ) DNA during genetic recombination and DNA repair, while the RuvA-RuvB complex plays an important role in the rescue of blocked DNA replication forks via replication fork reversal (RFR). RuvA specifically binds to HJ cruciform DNA, conferring on it an open structure. The RuvB hexamer acts as an ATP-dependent pump, pulling dsDNA into and through the RuvAB complex. HJ branch migration allows RuvC to scan DNA until it finds its consensus sequence, where it cleaves and resolves the cruciform DNA. The protein is Holliday junction branch migration complex subunit RuvA of Mannheimia succiniciproducens (strain KCTC 0769BP / MBEL55E).